The sequence spans 404 residues: Epoxide hydrolase 1 (404 aa).

Residues 74 to 96 (ILVRLLQFYYFVKFSAILFLGFA) traverse the membrane as a helical segment. The AB hydrolase-1 domain maps to 140 to 389 (PLMLFIHGYP…ASHWVQQDEP (250 aa)). The active-site Nucleophile is aspartate 215. The Proton donor role is filled by tyrosine 327. The Proton acceptor role is filled by histidine 382.

Belongs to the AB hydrolase superfamily. Epoxide hydrolase family.

It localises to the membrane. The enzyme catalyses an epoxide + H2O = an ethanediol. The catalysed reaction is 8,9-epoxy-(5Z,11Z,14Z)-eicosatrienoate + H2O = 8,9-dihydroxy-(5Z,11Z,14Z)-eicosatrienoate. It catalyses the reaction 11,12-epoxy-(5Z,8Z,14Z)-eicosatrienoate + H2O = 11,12-dihydroxy-(5Z,8Z,14Z)-eicosatrienoate. It carries out the reaction 14,15-epoxy-(5Z,8Z,11Z)-eicosatrienoate + H2O = 14,15-dihydroxy-(5Z,8Z,11Z)-eicosatrienoate. The enzyme catalyses 12,13-epoxy-(9Z)-octadecenoate + H2O = 12,13-dihydroxy-(9Z)-octadecenoate. The catalysed reaction is 9,10-epoxy-(12Z)-octadecenoate + H2O = 9,10-dihydroxy-(12Z)-octadecenoate. The protein operates within lipid metabolism. Its function is as follows. Catalyzes the hydrolysis of epoxide-containing fatty acids. Active against epoxyeicosatrienoic acids (EETs) including 8,9-epoxy-(5Z,11Z,14Z)-eicosatrienoate (8,9-EET), 11,12-epoxy-(5Z,8Z,14Z)-eicosatrienoate (11,12-EET) and 14,15-epoxy-(5Z,8Z,11Z)-eicosatrienoate (14,15-EET) and the linoleic acid metabolites 12,13-epoxy-(9Z)-octadecenoate (12,13-EpOME) and 9,10-epoxy-(12Z)-octadecenoate (9,10-EpOME). These epoxides function as lipid signaling molecules, the enzyme can deplete the supply of the epoxide signal by transforming them into diol species that are more readily eliminated through excretion. The chain is Epoxide hydrolase 1 from Caenorhabditis elegans.